The primary structure comprises 203 residues: GTP-binding protein YPTC1 (203 aa).

GTP-binding positions include Gly15 to Cys23, Tyr33 to Thr40, Asp63 to Gln67, Asn121 to Asp124, and Ser151 to Lys153. The Effector region motif lies at Tyr37 to Phe45. Residues Ala174 to Cys203 are disordered. 2 S-geranylgeranyl cysteine lipidation sites follow: Cys202 and Cys203.

Belongs to the small GTPase superfamily. Rab family.

The protein localises to the cell membrane. In terms of biological role, protein transport. Probably involved in vesicular traffic. The polypeptide is GTP-binding protein YPTC1 (YPTC1) (Chlamydomonas reinhardtii (Chlamydomonas smithii)).